Here is a 162-residue protein sequence, read N- to C-terminus: Small ribosomal subunit protein uS19 (162 aa).

Residues 1–27 (MAKQKKFSGKGSARSKRKQNRKQVGPR) are compositionally biased toward basic residues. A disordered region spans residues 1-29 (MAKQKKFSGKGSARSKRKQNRKQVGPRRR).

It belongs to the universal ribosomal protein uS19 family.

Protein S19 forms a complex with S13 that binds strongly to the 16S ribosomal RNA. The chain is Small ribosomal subunit protein uS19 from Methanococcus aeolicus (strain ATCC BAA-1280 / DSM 17508 / OCM 812 / Nankai-3).